Here is a 334-residue protein sequence, read N- to C-terminus: N-acetyl-gamma-glutamyl-phosphate reductase (334 aa).

Residue cysteine 149 is part of the active site.

Belongs to the NAGSA dehydrogenase family. Type 1 subfamily.

It localises to the cytoplasm. The catalysed reaction is N-acetyl-L-glutamate 5-semialdehyde + phosphate + NADP(+) = N-acetyl-L-glutamyl 5-phosphate + NADPH + H(+). The protein operates within amino-acid biosynthesis; L-arginine biosynthesis; N(2)-acetyl-L-ornithine from L-glutamate: step 3/4. Catalyzes the NADPH-dependent reduction of N-acetyl-5-glutamyl phosphate to yield N-acetyl-L-glutamate 5-semialdehyde. This chain is N-acetyl-gamma-glutamyl-phosphate reductase, found in Sulfurimonas denitrificans (strain ATCC 33889 / DSM 1251) (Thiomicrospira denitrificans (strain ATCC 33889 / DSM 1251)).